Reading from the N-terminus, the 72-residue chain is Large ribosomal subunit protein bL28 (72 aa).

It belongs to the bacterial ribosomal protein bL28 family.

The protein is Large ribosomal subunit protein bL28 of Chlorobaculum tepidum (strain ATCC 49652 / DSM 12025 / NBRC 103806 / TLS) (Chlorobium tepidum).